We begin with the raw amino-acid sequence, 393 residues long: Na(+)/H(+) antiporter NhaA (393 aa).

11 helical membrane passes run 18–38 (AGGVLLALSALVALVISNSPW), 65–85 (MLIWINDLWMAVFFFLVGLEI), 101–121 (MLPAVAALGGMAVPALIYAAI), 131–151 (GWGIPMATDIAFALGLLVLLG), 160–180 (VFLTAVAIIDDLGAILVIAFF), 184–204 (NLSPTMLLAAGLGALVLLGLN), 210–230 (AVGPYVVVGLVIWVCVLKSGI), 260–280 (ALQPWVAFLVLPVFAFANAGV), 298–318 (IAFGLLIGKPIGVFGASWLLI), 334–354 (FFGVCVLCGVGFTMSLFIGSL), and 369–389 (IGVLLGSLLSGAAGVALLLAS).

This sequence belongs to the NhaA Na(+)/H(+) (TC 2.A.33) antiporter family.

It localises to the cell inner membrane. The catalysed reaction is Na(+)(in) + 2 H(+)(out) = Na(+)(out) + 2 H(+)(in). Na(+)/H(+) antiporter that extrudes sodium in exchange for external protons. The protein is Na(+)/H(+) antiporter NhaA of Albidiferax ferrireducens (strain ATCC BAA-621 / DSM 15236 / T118) (Rhodoferax ferrireducens).